The following is a 261-amino-acid chain: MTLKARVIPCLDVKDGRVVKGVNFVDLIDAGDPVEAARAYDAAGADELCFLDITASSDNRETIFDVVARTAEQCFMPLTVGGGVRQVADIRKLLLAGADKVSINTAAVKNPEFVAEAADKFGNQCIVVAIDAKKVSGAGENDRWEIFTHGGRQPTGIDAVEFAQKVVDLGAGEILLTSMDRDGTKAGYDVALTRAVADSVRAPVIASGGVGTLDHLVAGIRDGHATAVLAASIFHFGTYTIGEAKRYMAEAGIPMRLDPVR.

Catalysis depends on residues aspartate 12 and aspartate 131.

Belongs to the HisA/HisF family. As to quaternary structure, heterodimer of HisH and HisF.

The protein localises to the cytoplasm. The enzyme catalyses 5-[(5-phospho-1-deoxy-D-ribulos-1-ylimino)methylamino]-1-(5-phospho-beta-D-ribosyl)imidazole-4-carboxamide + L-glutamine = D-erythro-1-(imidazol-4-yl)glycerol 3-phosphate + 5-amino-1-(5-phospho-beta-D-ribosyl)imidazole-4-carboxamide + L-glutamate + H(+). The protein operates within amino-acid biosynthesis; L-histidine biosynthesis; L-histidine from 5-phospho-alpha-D-ribose 1-diphosphate: step 5/9. In terms of biological role, IGPS catalyzes the conversion of PRFAR and glutamine to IGP, AICAR and glutamate. The HisF subunit catalyzes the cyclization activity that produces IGP and AICAR from PRFAR using the ammonia provided by the HisH subunit. The protein is Imidazole glycerol phosphate synthase subunit HisF of Brucella abortus (strain S19).